Here is a 105-residue protein sequence, read N- to C-terminus: Integration host factor subunit alpha (105 aa).

The protein belongs to the bacterial histone-like protein family. Heterodimer of an alpha and a beta chain.

Functionally, this protein is one of the two subunits of integration host factor, a specific DNA-binding protein that functions in genetic recombination as well as in transcriptional and translational control. The sequence is that of Integration host factor subunit alpha from Xanthobacter autotrophicus (strain ATCC BAA-1158 / Py2).